The following is a 151-amino-acid chain: MSIIQNRKAFHDYFIEEKLEAGLVLEGWEVKAIRAGRVQLKESYVDWKNGAFWLIGCHITPLQSASTHVKPDPVRPRKLLMSQAEINRFIGKVERAGYTMMALDLHYTKGNVKAEVGLAKGKKLHDKRDTEKDREWQREKQRVMKNQRGAA.

Residues 121 to 151 are disordered; the sequence is GKKLHDKRDTEKDREWQREKQRVMKNQRGAA. The segment covering 126–142 has biased composition (basic and acidic residues); the sequence is DKRDTEKDREWQREKQR.

Belongs to the SmpB family.

The protein resides in the cytoplasm. In terms of biological role, required for rescue of stalled ribosomes mediated by trans-translation. Binds to transfer-messenger RNA (tmRNA), required for stable association of tmRNA with ribosomes. tmRNA and SmpB together mimic tRNA shape, replacing the anticodon stem-loop with SmpB. tmRNA is encoded by the ssrA gene; the 2 termini fold to resemble tRNA(Ala) and it encodes a 'tag peptide', a short internal open reading frame. During trans-translation Ala-aminoacylated tmRNA acts like a tRNA, entering the A-site of stalled ribosomes, displacing the stalled mRNA. The ribosome then switches to translate the ORF on the tmRNA; the nascent peptide is terminated with the 'tag peptide' encoded by the tmRNA and targeted for degradation. The ribosome is freed to recommence translation, which seems to be the essential function of trans-translation. The chain is SsrA-binding protein from Chromobacterium violaceum (strain ATCC 12472 / DSM 30191 / JCM 1249 / CCUG 213 / NBRC 12614 / NCIMB 9131 / NCTC 9757 / MK).